A 487-amino-acid polypeptide reads, in one-letter code: MKLYTKTAHELHDLLVRKEVSATEIVKTQADRMQALEPKIRAFVTLTVDKALEQAARVDAKIAAGEAIGPLEGIPMAIKDNMCTDGVRTTCSSKILNNFVPPYDATVVTKLKEAGAVMMGKTNLDEFAMGSSTENSGFFATCNPWDIERVPGGSSGGSAASVAAGQAVFSLGSDTGGSIRQPAAFCGVVGLKPTYGAVSRFGLIAFASSLDQIGPFTRDVRDCAHVMNAIAGHDAKDSTSAPVDYPDYTSLLGKPIKGWRVGLPKEYFGDGMDPEVKEVIEKAVKTIEDLGAEVAECSLPHTEYALPVYYLIAPAEASSNLARYDGVRYGYRSESADDLITMFKKTRAEGFGDEVKRRIMLGTYALSSGYYDAYYLKALKVRTLIKNDFDQAFEKFDVILSPTTPTVAFKFGDRTDNPLQMYLSDIYTLSVNLAGIPGLSINAGFAKGMPVGLQIIGKPFDEARLLQIAYAYEEATGCHSKMPDLGV.

Catalysis depends on charge relay system residues Lys-79 and Ser-154. The active-site Acyl-ester intermediate is the Ser-178.

This sequence belongs to the amidase family. GatA subfamily. Heterotrimer of A, B and C subunits.

The catalysed reaction is L-glutamyl-tRNA(Gln) + L-glutamine + ATP + H2O = L-glutaminyl-tRNA(Gln) + L-glutamate + ADP + phosphate + H(+). In terms of biological role, allows the formation of correctly charged Gln-tRNA(Gln) through the transamidation of misacylated Glu-tRNA(Gln) in organisms which lack glutaminyl-tRNA synthetase. The reaction takes place in the presence of glutamine and ATP through an activated gamma-phospho-Glu-tRNA(Gln). The polypeptide is Glutamyl-tRNA(Gln) amidotransferase subunit A (Heliobacterium modesticaldum (strain ATCC 51547 / Ice1)).